The primary structure comprises 242 residues: MAPK-interacting and spindle-stabilizing protein-like (242 aa).

Disordered stretches follow at residues 1-145 (MSDE…SLGP) and 192-242 (PPGA…HSYH). Ser-2 carries the N-acetylserine modification. Phosphoserine is present on residues Ser-2, Ser-6, and Ser-15. The segment covering 13–29 (EQSSAKPPAVTNTKAGH) has biased composition (polar residues). Residues 30-43 (SSQGWPGSSPWSNP) show a composition bias toward low complexity. Pro residues-rich tracts occupy residues 44–53 (SAPPAMPSGL) and 75–114 (SMPP…PGPT). Over residues 192 to 210 (PPGAWGPAAPYPGPAGSYP) the composition is skewed to low complexity.

Belongs to the MISS family.

This is MAPK-interacting and spindle-stabilizing protein-like (Mapk1ip1l) from Mus musculus (Mouse).